Reading from the N-terminus, the 322-residue chain is Hapalindole dimethylallyltransferase (322 aa).

Arginine 46, arginine 60, lysine 115, asparagine 166, tyrosine 168, arginine 221, tyrosine 225, and lysine 275 together coordinate dimethylallyl diphosphate.

This sequence belongs to the aromatic prenyltransferase family.

The enzyme catalyses hapalindole G + dimethylallyl diphosphate = ambiguine A + diphosphate. It carries out the reaction hapalindole U + dimethylallyl diphosphate + H(+) = ambiguine H + diphosphate. Activity is slightly increased in the presence of Mg(2+). Functionally, prenyltransferase involved in the biosynthesis of ambiguines, a family of hapalindole-type alkaloids. Catalyzes the reverse prenylation of hapalindole G or U at the C2 position with dimethylallyl diphosphate (DMAPP) to generate ambiguine A or H, respectively. In addition, accepts hapalindole A, an epimer of hapalindole G, and catalyzes normal prenylation at its C2 position. This is Hapalindole dimethylallyltransferase from Fischerella ambigua (strain UTEX 1903).